The following is a 339-amino-acid chain: Transposase for insertion sequence element IS1086 (339 aa).

Positions Asp176–Leu329 constitute an Integrase catalytic domain.

This sequence belongs to the transposase IS30 family.

In terms of biological role, required for the transposition of the insertion element. The protein is Transposase for insertion sequence element IS1086 (IS1086) of Cupriavidus metallidurans (strain ATCC 43123 / DSM 2839 / NBRC 102507 / CH34) (Ralstonia metallidurans).